The following is a 402-amino-acid chain: Phosphoglycerate kinase (402 aa).

Residues 24–26 (DFN), R40, 63–66 (HFGR), R122, and R155 each bind substrate. ATP-binding positions include K206, G297, E328, and 357–360 (GGDS).

The protein belongs to the phosphoglycerate kinase family. In terms of assembly, monomer.

Its subcellular location is the cytoplasm. It catalyses the reaction (2R)-3-phosphoglycerate + ATP = (2R)-3-phospho-glyceroyl phosphate + ADP. It functions in the pathway carbohydrate degradation; glycolysis; pyruvate from D-glyceraldehyde 3-phosphate: step 2/5. This Synechococcus sp. (strain ATCC 27144 / PCC 6301 / SAUG 1402/1) (Anacystis nidulans) protein is Phosphoglycerate kinase.